We begin with the raw amino-acid sequence, 807 residues long: Phenylalanine--tRNA ligase beta subunit (807 aa).

The region spanning 39–153 is the tRNA-binding domain; that stretch reads SARAQGVVVG…SLPPNGSPVA (115 aa). The 85-residue stretch at 407 to 491 folds into the B5 domain; the sequence is AEAGPVLLRR…RLVGFDRFGA (85 aa). Residues Asp-469, Asp-475, Glu-478, and Glu-479 each contribute to the Mg(2+) site. The region spanning 713-806 is the FDX-ACB domain; it reads PTVPFSERDL…LSKQFQAELR (94 aa).

Belongs to the phenylalanyl-tRNA synthetase beta subunit family. Type 1 subfamily. In terms of assembly, tetramer of two alpha and two beta subunits. It depends on Mg(2+) as a cofactor.

It is found in the cytoplasm. It catalyses the reaction tRNA(Phe) + L-phenylalanine + ATP = L-phenylalanyl-tRNA(Phe) + AMP + diphosphate + H(+). This is Phenylalanine--tRNA ligase beta subunit from Synechococcus sp. (strain CC9605).